We begin with the raw amino-acid sequence, 390 residues long: 8-amino-7-oxononanoate synthase (390 aa).

Arg19 contacts substrate. Residue 106–107 (GY) coordinates pyridoxal 5'-phosphate. His131 contacts substrate. Ser176, His204, and Thr233 together coordinate pyridoxal 5'-phosphate. N6-(pyridoxal phosphate)lysine is present on Lys236. Thr350 is a substrate binding site.

It belongs to the class-II pyridoxal-phosphate-dependent aminotransferase family. BioF subfamily. Homodimer. The cofactor is pyridoxal 5'-phosphate.

The catalysed reaction is 6-carboxyhexanoyl-[ACP] + L-alanine + H(+) = (8S)-8-amino-7-oxononanoate + holo-[ACP] + CO2. Its pathway is cofactor biosynthesis; biotin biosynthesis. Functionally, catalyzes the decarboxylative condensation of pimeloyl-[acyl-carrier protein] and L-alanine to produce 8-amino-7-oxononanoate (AON), [acyl-carrier protein], and carbon dioxide. This is 8-amino-7-oxononanoate synthase from Pseudomonas putida (strain W619).